We begin with the raw amino-acid sequence, 187 residues long: dTTP/UTP pyrophosphatase (187 aa).

Aspartate 65 acts as the Proton acceptor in catalysis.

This sequence belongs to the Maf family. YhdE subfamily. A divalent metal cation is required as a cofactor.

It is found in the cytoplasm. It carries out the reaction dTTP + H2O = dTMP + diphosphate + H(+). It catalyses the reaction UTP + H2O = UMP + diphosphate + H(+). In terms of biological role, nucleoside triphosphate pyrophosphatase that hydrolyzes dTTP and UTP. May have a dual role in cell division arrest and in preventing the incorporation of modified nucleotides into cellular nucleic acids. The protein is dTTP/UTP pyrophosphatase of Pyrococcus abyssi (strain GE5 / Orsay).